The following is a 63-amino-acid chain: uncharacterized protein (63 aa).

An N-terminal signal peptide occupies residues methionine 1–alanine 21.

This is an uncharacterized protein from Haemophilus influenzae (strain ATCC 51907 / DSM 11121 / KW20 / Rd).